The sequence spans 233 residues: 7-cyano-7-deazaguanine synthase (233 aa).

Leu7–Ser17 is an ATP binding site. Zn(2+)-binding residues include Cys195, Cys206, Cys209, and Cys212.

Belongs to the QueC family. Zn(2+) is required as a cofactor.

The catalysed reaction is 7-carboxy-7-deazaguanine + NH4(+) + ATP = 7-cyano-7-deazaguanine + ADP + phosphate + H2O + H(+). Its pathway is purine metabolism; 7-cyano-7-deazaguanine biosynthesis. Its function is as follows. Catalyzes the ATP-dependent conversion of 7-carboxy-7-deazaguanine (CDG) to 7-cyano-7-deazaguanine (preQ(0)). This chain is 7-cyano-7-deazaguanine synthase, found in Methanococcus maripaludis (strain DSM 14266 / JCM 13030 / NBRC 101832 / S2 / LL).